We begin with the raw amino-acid sequence, 468 residues long: Cysteine--tRNA ligase (468 aa).

Zn(2+) is bound at residue Cys-29. Positions 31 to 41 (PTVYNYIHIGN) match the 'HIGH' region motif. Zn(2+)-binding residues include Cys-209, His-234, and Glu-238. The 'KMSKS' region signature appears at 266–270 (KMSKS). Lys-269 is an ATP binding site.

It belongs to the class-I aminoacyl-tRNA synthetase family. As to quaternary structure, monomer. Requires Zn(2+) as cofactor.

Its subcellular location is the cytoplasm. It carries out the reaction tRNA(Cys) + L-cysteine + ATP = L-cysteinyl-tRNA(Cys) + AMP + diphosphate. This is Cysteine--tRNA ligase from Brevibacillus brevis (strain 47 / JCM 6285 / NBRC 100599).